The chain runs to 116 residues: Large ribosomal subunit protein bL17 (116 aa).

It belongs to the bacterial ribosomal protein bL17 family. As to quaternary structure, part of the 50S ribosomal subunit. Contacts protein L32.

The polypeptide is Large ribosomal subunit protein bL17 (Prochlorococcus marinus (strain MIT 9301)).